Here is a 216-residue protein sequence, read N- to C-terminus: Peptide methionine sulfoxide reductase MsrA (216 aa).

The active site involves Cys-54.

It belongs to the MsrA Met sulfoxide reductase family.

The enzyme catalyses L-methionyl-[protein] + [thioredoxin]-disulfide + H2O = L-methionyl-(S)-S-oxide-[protein] + [thioredoxin]-dithiol. The catalysed reaction is [thioredoxin]-disulfide + L-methionine + H2O = L-methionine (S)-S-oxide + [thioredoxin]-dithiol. Its function is as follows. Has an important function as a repair enzyme for proteins that have been inactivated by oxidation. Catalyzes the reversible oxidation-reduction of methionine sulfoxide in proteins to methionine. This Xanthomonas campestris pv. campestris (strain 8004) protein is Peptide methionine sulfoxide reductase MsrA.